The sequence spans 134 residues: MAKSTSSAPSQRMLRVGEQVRAAITQVLQRGDVRDPLIESTVISISEVRMSPDLKLATAYVTPLGVADHAAVIEALNKHAKFIRGRLGPHLRQMKYMPDVRFRDDTSFENYQKIDSLLRSPEVSRDLDRDSDEE.

This sequence belongs to the RbfA family. In terms of assembly, monomer. Binds 30S ribosomal subunits, but not 50S ribosomal subunits or 70S ribosomes.

It localises to the cytoplasm. Its function is as follows. One of several proteins that assist in the late maturation steps of the functional core of the 30S ribosomal subunit. Associates with free 30S ribosomal subunits (but not with 30S subunits that are part of 70S ribosomes or polysomes). Required for efficient processing of 16S rRNA. May interact with the 5'-terminal helix region of 16S rRNA. This is Ribosome-binding factor A from Sinorhizobium medicae (strain WSM419) (Ensifer medicae).